The primary structure comprises 510 residues: Probable DNA ligase (510 aa).

E210 serves as a coordination point for ATP. K212 acts as the N6-AMP-lysine intermediate in catalysis. ATP is bound by residues R217, R232, E261, F296, R367, and K373.

This sequence belongs to the ATP-dependent DNA ligase family. The cofactor is Mg(2+).

The enzyme catalyses ATP + (deoxyribonucleotide)n-3'-hydroxyl + 5'-phospho-(deoxyribonucleotide)m = (deoxyribonucleotide)n+m + AMP + diphosphate.. In terms of biological role, DNA ligase that seals nicks in double-stranded DNA during DNA replication, DNA recombination and DNA repair. This is Probable DNA ligase from Saccharopolyspora erythraea (strain ATCC 11635 / DSM 40517 / JCM 4748 / NBRC 13426 / NCIMB 8594 / NRRL 2338).